Reading from the N-terminus, the 527-residue chain is Peptide chain release factor 3 (527 aa).

A tr-type G domain is found at Ala-9–Leu-277. Residues Ser-18 to Thr-25, Asp-86 to His-90, and Asn-140 to Asp-143 each bind GTP.

This sequence belongs to the TRAFAC class translation factor GTPase superfamily. Classic translation factor GTPase family. PrfC subfamily.

It is found in the cytoplasm. In terms of biological role, increases the formation of ribosomal termination complexes and stimulates activities of RF-1 and RF-2. It binds guanine nucleotides and has strong preference for UGA stop codons. It may interact directly with the ribosome. The stimulation of RF-1 and RF-2 is significantly reduced by GTP and GDP, but not by GMP. The chain is Peptide chain release factor 3 from Pseudomonas entomophila (strain L48).